A 787-amino-acid polypeptide reads, in one-letter code: Longitudinals lacking protein, isoforms A/B/D/L (787 aa).

The 66-residue stretch at 32 to 97 (VDCTLAAEGK…MYRGEVNISQ (66 aa)) folds into the BTB domain. Disordered regions lie at residues 115 to 200 (LSDN…SSVL), 228 to 340 (SSGP…ASAS), 506 to 560 (AKDV…SGGK), and 653 to 677 (TTGS…SVLG). Composition is skewed to low complexity over residues 162-175 (SGDV…SSSP), 228-251 (SSGP…LTST), 263-293 (TSST…QTTS), 329-340 (NSATGPNPASAS), 537-560 (HSSS…SGGK), and 659-668 (SPSNSGHNNS). A C2H2-type 1; degenerate zinc finger spans residues 685 to 707 (HPCPVCGRVYKLKSSLRNHQKWE). A C2H2-type 2 zinc finger spans residues 714 to 737 (FQCPFCVYRAKQKMHIGRHMERMH).

As to quaternary structure, isoform D interacts with JIL-1. In terms of tissue distribution, by stage 11, isoform B is expressed throughout the mesoderm, whereas isoform A, isoform D and isoform L are expressed throughout the ectoderm. Expression becomes restricted during later stages; starting from stage 14 to 16, isoform B is expressed in muscle. Isoform A, isoform D, and at low levels isoform B, are expressed in the CNS. Expression is also seen in specific types of cells in the embryo; isoform A and isoform L are expressed in a dynamic pattern in the ventral neurogenic region starting at stage 7. Isoform L is expressed around the tracheal pits at stage 11.

The protein localises to the nucleus. Its function is as follows. Putative transcription factor required for axon growth and guidance in the central and peripheral nervous systems. Repels CNS axons away from the midline by promoting the expression of the midline repellent sli and its receptor robo. This is Longitudinals lacking protein, isoforms A/B/D/L from Drosophila melanogaster (Fruit fly).